Here is a 523-residue protein sequence, read N- to C-terminus: GMP synthase [glutamine-hydrolyzing] (523 aa).

Positions 8–205 (KILILDFGSQ…VVDICGCETN (198 aa)) constitute a Glutamine amidotransferase type-1 domain. The active-site Nucleophile is the Cys-85. Active-site residues include His-179 and Glu-181. In terms of domain architecture, GMPS ATP-PPase spans 206–398 (WTAENIIEDA…LGLPAEMLNR (193 aa)). An ATP-binding site is contributed by 233-239 (SGGVDSS).

In terms of assembly, homodimer.

The catalysed reaction is XMP + L-glutamine + ATP + H2O = GMP + L-glutamate + AMP + diphosphate + 2 H(+). Its pathway is purine metabolism; GMP biosynthesis; GMP from XMP (L-Gln route): step 1/1. Functionally, catalyzes the synthesis of GMP from XMP. In Histophilus somni (strain 2336) (Haemophilus somnus), this protein is GMP synthase [glutamine-hydrolyzing].